We begin with the raw amino-acid sequence, 109 residues long: Large ribosomal subunit protein uL22 (109 aa).

Belongs to the universal ribosomal protein uL22 family. In terms of assembly, part of the 50S ribosomal subunit.

Its function is as follows. This protein binds specifically to 23S rRNA; its binding is stimulated by other ribosomal proteins, e.g. L4, L17, and L20. It is important during the early stages of 50S assembly. It makes multiple contacts with different domains of the 23S rRNA in the assembled 50S subunit and ribosome. In terms of biological role, the globular domain of the protein is located near the polypeptide exit tunnel on the outside of the subunit, while an extended beta-hairpin is found that lines the wall of the exit tunnel in the center of the 70S ribosome. This chain is Large ribosomal subunit protein uL22, found in Dechloromonas aromatica (strain RCB).